Reading from the N-terminus, the 786-residue chain is m7GpppN-mRNA hydrolase dcap-2 (786 aa).

Positions Q25–S61 are enriched in polar residues. Positions Q25–R148 are disordered. Positions K62–A72 are enriched in basic residues. Polar residues-rich tracts occupy residues M101–S111 and Q118–E133. Over residues Q134 to Y144 the composition is skewed to low complexity. A Nudix hydrolase domain is found at S238 to F366. The short motif at G273–G294 is the Nudix box element. E288 and E292 together coordinate Mg(2+). Disordered regions lie at residues I556–A576 and I623–V655. 2 stretches are compositionally biased toward polar residues: residues I623–P632 and S646–V655.

Belongs to the Nudix hydrolase family. DCP2 subfamily. In terms of assembly, may be a component of the decapping complex composed of dcap-1 and dcap-2. It depends on Mg(2+) as a cofactor. Mn(2+) is required as a cofactor. Expressed in sensory neurons.

The protein localises to the cytoplasmic granule. It is found in the cytoplasm. It localises to the perinuclear region. The catalysed reaction is a 5'-end (N(7)-methyl 5'-triphosphoguanosine)-ribonucleoside in mRNA + H2O = N(7)-methyl-GDP + a 5'-end phospho-ribonucleoside in mRNA + 2 H(+). It carries out the reaction a 5'-end (N(2),N(2),N(7)-trimethyl 5'-triphosphoguanosine)-ribonucleoside in mRNA + H2O = N(2),N(2),N(7)-trimethyl-GDP + a 5'-end phospho-ribonucleoside in mRNA + 2 H(+). Inhibited by capped and uncapped RNA. Not inhibited by dinucleotide cap or methylated nucleotide analogs. Decapping metalloenzyme that catalyzes the cleavage of the cap structure on mRNAs. Removes the 7-methyl guanine cap structure from mRNA molecules, yielding a 5'-phosphorylated mRNA fragment and 7m-GDP. RNA-decapping enzyme although it does not bind the RNA cap. May contribute to gene regulation in multiple RNA pathways including monomethylguanosine- and trimethylguanosine-capped RNAs. In oocytes, may play a role in the response to stress induced by heat shock, osmotic stress and anoxia. Required for the developmental axon guidance and regrowth of PLM touch receptor neurons. Early in embryogenesis, plays a role in ciliary shape formation in sensory neurons. Promotes survival at high temperatures. In Caenorhabditis elegans, this protein is m7GpppN-mRNA hydrolase dcap-2.